Consider the following 308-residue polypeptide: Elongation factor Ts (308 aa).

An involved in Mg(2+) ion dislocation from EF-Tu region spans residues 80–83; it reads TDFV.

This sequence belongs to the EF-Ts family.

It is found in the cytoplasm. Functionally, associates with the EF-Tu.GDP complex and induces the exchange of GDP to GTP. It remains bound to the aminoacyl-tRNA.EF-Tu.GTP complex up to the GTP hydrolysis stage on the ribosome. The sequence is that of Elongation factor Ts from Rhodopseudomonas palustris (strain BisB5).